We begin with the raw amino-acid sequence, 317 residues long: Transaldolase (317 aa).

The Schiff-base intermediate with substrate role is filled by Lys-132.

It belongs to the transaldolase family. Type 1 subfamily. In terms of assembly, homodimer.

The protein localises to the cytoplasm. The enzyme catalyses D-sedoheptulose 7-phosphate + D-glyceraldehyde 3-phosphate = D-erythrose 4-phosphate + beta-D-fructose 6-phosphate. It functions in the pathway carbohydrate degradation; pentose phosphate pathway; D-glyceraldehyde 3-phosphate and beta-D-fructose 6-phosphate from D-ribose 5-phosphate and D-xylulose 5-phosphate (non-oxidative stage): step 2/3. Transaldolase is important for the balance of metabolites in the pentose-phosphate pathway. In Yersinia pseudotuberculosis serotype IB (strain PB1/+), this protein is Transaldolase.